We begin with the raw amino-acid sequence, 456 residues long: tRNA-2-methylthio-N(6)-dimethylallyladenosine synthase (456 aa).

In terms of domain architecture, MTTase N-terminal spans 3–120 (KKVYVKTFGC…LPQMIDQRRA (118 aa)). Residues C12, C49, C83, C157, C161, and C164 each coordinate [4Fe-4S] cluster. A Radical SAM core domain is found at 143 to 377 (RIDGPSAFVS…QATIEENVQR (235 aa)). One can recognise a TRAM domain in the interval 380–447 (QAMVGKVERI…PHSLRGELVM (68 aa)).

Belongs to the methylthiotransferase family. MiaB subfamily. Monomer. It depends on [4Fe-4S] cluster as a cofactor.

The protein localises to the cytoplasm. The catalysed reaction is N(6)-dimethylallyladenosine(37) in tRNA + (sulfur carrier)-SH + AH2 + 2 S-adenosyl-L-methionine = 2-methylsulfanyl-N(6)-dimethylallyladenosine(37) in tRNA + (sulfur carrier)-H + 5'-deoxyadenosine + L-methionine + A + S-adenosyl-L-homocysteine + 2 H(+). Its function is as follows. Catalyzes the methylthiolation of N6-(dimethylallyl)adenosine (i(6)A), leading to the formation of 2-methylthio-N6-(dimethylallyl)adenosine (ms(2)i(6)A) at position 37 in tRNAs that read codons beginning with uridine. The protein is tRNA-2-methylthio-N(6)-dimethylallyladenosine synthase of Paraburkholderia phymatum (strain DSM 17167 / CIP 108236 / LMG 21445 / STM815) (Burkholderia phymatum).